Consider the following 134-residue polypeptide: Profilin-3 (134 aa).

Cysteines 13 and 118 form a disulfide. Residues A84–T100 carry the Involved in PIP2 interaction motif. T114 carries the post-translational modification Phosphothreonine.

Belongs to the profilin family. As to quaternary structure, occurs in many kinds of cells as a complex with monomeric actin in a 1:1 ratio. Post-translationally, phosphorylated by MAP kinases.

The protein resides in the cytoplasm. Its subcellular location is the cytoskeleton. In terms of biological role, binds to actin and affects the structure of the cytoskeleton. At high concentrations, profilin prevents the polymerization of actin, whereas it enhances it at low concentrations. In Olea europaea (Common olive), this protein is Profilin-3.